The primary structure comprises 46 residues: Osteocalcin 2 (46 aa).

A Gla domain is found at 1 to 43 (AVPAGTLSPLQMESLREVCEVNVACDEMADTAGIVAAYTXFYG). The residue at position 6 (threonine 6) is a Phosphothreonine. 4 residues coordinate Ca(2+): glutamate 13, glutamate 17, glutamate 20, and aspartate 26. A 4-carboxyglutamate mark is found at glutamate 13, glutamate 17, and glutamate 20. A disulfide bond links cysteine 19 and cysteine 25. Residue glutamate 27 is modified to 4-carboxyglutamate.

The protein belongs to the osteocalcin/matrix Gla protein family. Post-translationally, gamma-carboxyglutamate residues are formed by vitamin K dependent carboxylation by GGCX. These residues are essential for the binding of calcium.

The protein localises to the secreted. In terms of biological role, the carboxylated form is one of the main organic components of the bone matrix, which constitutes 1-2% of the total bone protein. The carboxylated form binds strongly to apatite and calcium. In Solea senegalensis (Senegalese sole), this protein is Osteocalcin 2.